The sequence spans 292 residues: MAKDEDNSRVHLLDLPWEDVLVPHILSYLPLRHILSLQRVSKPFHSLVHIYLCNCRHFDSTQLGPQLPKTTFSELLKNNTVLQKLDLQSCSDWLTDKELLPIIGQNHHLTYINLNSCGQLTRQSLVAISLSCPHLQNICLGHCDWVDCLSMRSLADHCKCLEAIDLTACRQLKDDAISYLVQKSTRLKSLSLAVNANISDIAVEETAKSCRDLEHLDLTGCLRVKNDSIRTLAEYCNNLKSLKVKHCHNVTESSLGNLRKREVVLDVEPPLQRALVLLQDVVGFAPFINLQI.

Residues 12-59 form the F-box domain; sequence LLDLPWEDVLVPHILSYLPLRHILSLQRVSKPFHSLVHIYLCNCRHFD. LRR repeat units follow at residues 134-155, 160-181, 186-207, 212-233, and 238-259; these read HLQN…RSLA, CLEA…SYLV, RLKS…EETA, DLEH…RTLA, and NLKS…GNLR.

The protein belongs to the FBXL15 family. Part of the SCF (SKP1-CUL1-F-box) E3 ubiquitin-protein ligase complex SCF(FBXL15).

The protein localises to the cytoplasm. It functions in the pathway protein modification; protein ubiquitination. Functionally, substrate recognition component of a SCF (SKP1-CUL1-F-box protein) E3 ubiquitin-protein ligase complex which mediates the ubiquitination and subsequent proteasomal degradation of target proteins. Acts as a positive regulator of the BMP signaling pathway. Required for dorsal/ventral pattern formation. In Xenopus laevis (African clawed frog), this protein is F-box/LRR-repeat protein 15 (fbxl15).